A 426-amino-acid chain; its full sequence is Glutamate-1-semialdehyde 2,1-aminomutase (426 aa).

At Lys265 the chain carries N6-(pyridoxal phosphate)lysine.

Belongs to the class-III pyridoxal-phosphate-dependent aminotransferase family. HemL subfamily. In terms of assembly, homodimer. Requires pyridoxal 5'-phosphate as cofactor.

The protein localises to the cytoplasm. The catalysed reaction is (S)-4-amino-5-oxopentanoate = 5-aminolevulinate. It functions in the pathway porphyrin-containing compound metabolism; protoporphyrin-IX biosynthesis; 5-aminolevulinate from L-glutamyl-tRNA(Glu): step 2/2. This is Glutamate-1-semialdehyde 2,1-aminomutase (hemL) from Salmonella typhimurium (strain SL1344).